A 568-amino-acid polypeptide reads, in one-letter code: Protein adenylyltransferase SelO, mitochondrial (568 aa).

8 residues coordinate ATP: Gly120, Gly122, Arg123, Lys144, Asp156, Gly157, Arg208, and Arg215. Asp287 acts as the Proton acceptor in catalysis. 2 residues coordinate Mg(2+): Asn288 and Asp297. ATP is bound at residue Asp297.

The protein belongs to the SELO family. Requires Mg(2+) as cofactor. Forms probably one or more intrachain disulfide bridges.

Its subcellular location is the mitochondrion. It catalyses the reaction L-tyrosyl-[protein] + ATP = O-(5'-adenylyl)-L-tyrosyl-[protein] + diphosphate. Its function is as follows. Catalyzes the transfer of adenosine 5'-monophosphate (AMP) to Tyr residues of target mitochondrial proteins (AMPylation). Involved in redox homeostasis by regulating the cellular response to oxidative stress. Regulates protein S-glutathionylation levels possibly by AMPylation of deglutathionylation enzymes such as glutaredoxins. This is Protein adenylyltransferase SelO, mitochondrial from Schizosaccharomyces pombe (strain 972 / ATCC 24843) (Fission yeast).